We begin with the raw amino-acid sequence, 45 residues long: Bomanin Short 1 (45 aa).

Positions 1-20 are cleaved as a signal peptide; the sequence is MKFFSVVTVFVLGLLAVANA. A propeptide spans 21–27 (removed by a dipeptidylpeptidase); that stretch reads VPLSPDP. The cysteines at positions 36 and 39 are disulfide-linked. Position 43 is a glycine amide (G43).

Hemolymph (at protein level).

The protein resides in the secreted. Secreted immune-induced peptide induced by Toll signaling. Has a role in resistance to bacterial and fungal infections. Has no activity against the fungus C.glabrata in vitro. The chain is Bomanin Short 1 from Drosophila melanogaster (Fruit fly).